The following is a 277-amino-acid chain: Large ribosomal subunit protein uL2 (277 aa).

Positions 199–277 (DHGNINDGKA…ILRSRHQRKS (79 aa)) are disordered.

This sequence belongs to the universal ribosomal protein uL2 family. As to quaternary structure, part of the 50S ribosomal subunit. Forms a bridge to the 30S subunit in the 70S ribosome.

Functionally, one of the primary rRNA binding proteins. Required for association of the 30S and 50S subunits to form the 70S ribosome, for tRNA binding and peptide bond formation. It has been suggested to have peptidyltransferase activity; this is somewhat controversial. Makes several contacts with the 16S rRNA in the 70S ribosome. In Mesorhizobium japonicum (strain LMG 29417 / CECT 9101 / MAFF 303099) (Mesorhizobium loti (strain MAFF 303099)), this protein is Large ribosomal subunit protein uL2.